The sequence spans 442 residues: D-inositol 3-phosphate glycosyltransferase (442 aa).

His26 provides a ligand contact to 1D-myo-inositol 3-phosphate. Residues 32–33 (QP) and Gly40 contribute to the UDP-N-acetyl-alpha-D-glucosamine site. 1D-myo-inositol 3-phosphate is bound by residues 37-42 (DAGGMN), Lys95, Tyr128, Thr152, and Arg172. UDP-N-acetyl-alpha-D-glucosamine is bound by residues Arg246, Lys251, and Gln304. Mg(2+)-binding residues include Tyr313, Arg314, and Ala316. Glu326 and Glu334 together coordinate UDP-N-acetyl-alpha-D-glucosamine. Thr340 provides a ligand contact to Mg(2+).

Belongs to the glycosyltransferase group 1 family. MshA subfamily. Homodimer.

It carries out the reaction 1D-myo-inositol 3-phosphate + UDP-N-acetyl-alpha-D-glucosamine = 1D-myo-inositol 2-acetamido-2-deoxy-alpha-D-glucopyranoside 3-phosphate + UDP + H(+). In terms of biological role, catalyzes the transfer of a N-acetyl-glucosamine moiety to 1D-myo-inositol 3-phosphate to produce 1D-myo-inositol 2-acetamido-2-deoxy-glucopyranoside 3-phosphate in the mycothiol biosynthesis pathway. The protein is D-inositol 3-phosphate glycosyltransferase of Mycolicibacterium gilvum (strain PYR-GCK) (Mycobacterium gilvum (strain PYR-GCK)).